The following is a 774-amino-acid chain: Glycophorin-binding protein 130 (774 aa).

The short motif at 84–88 (RILAE) is the PEXEL motif element. Disordered stretches follow at residues 97–243 (EKTT…AADP), 256–291 (LTNT…EYAS), 310–334 (DPND…PEGQ), 358–383 (NTDP…DPEG), 410–434 (DPND…PEGQ), 458–481 (NTDP…SDPE), 509–533 (DPND…PEGQ), 609–632 (DPND…DPEG), 661–682 (NDEV…DPEG), and 709–734 (DPND…EGQI). Basic and acidic residues-rich tracts occupy residues 117–140 (TKKD…SEKQ) and 174–198 (KKEE…EPKA). Positions 201–228 (VSQKPSTSTRSNNEVKIRAASNQETLTS) are enriched in polar residues. GBP repeat units lie at residues 226–275 (LTSA…NKED), 276–325 (LTSA…NKED), 326–375 (LTSA…NKED), 376–425 (LTSA…NKED), 426–474 (LTSA…DNKE), 475–524 (LTSS…NKED), 525–574 (LTSA…NKEE), 575–624 (LTSS…NKED), 625–674 (LTSA…NKED), 675–724 (LTSA…NKED), and 725–774 (LTSA…NNEA). 9 stretches are compositionally biased toward basic and acidic residues: residues 264-276 (EVER…KEDL), 314-326 (DVER…KEDL), 364-376 (EVER…KEDL), 414-426 (EVER…KEDL), 464-476 (EVER…KELT), 513-525 (EVER…KEDL), 613-625 (EVER…KEDL), 663-675 (EVER…KEDL), and 713-725 (DVER…KEDL).

Interacts with host glycophorin.

The protein localises to the secreted. It localises to the cell surface. The protein resides in the host cytoplasm. In terms of biological role, involved in merozoite invasion of host erythrocytes. The polypeptide is Glycophorin-binding protein 130 (Plasmodium falciparum (isolate FCR-3 / Gambia)).